The chain runs to 487 residues: Probable cobyric acid synthase (487 aa).

Residues 246 to 431 (LVRIAVIRLP…LHGLFMVPAA (186 aa)) enclose the GATase cobBQ-type domain. Catalysis depends on cysteine 325, which acts as the Nucleophile. Histidine 423 is an active-site residue.

It belongs to the CobB/CobQ family. CobQ subfamily.

It functions in the pathway cofactor biosynthesis; adenosylcobalamin biosynthesis. Functionally, catalyzes amidations at positions B, D, E, and G on adenosylcobyrinic A,C-diamide. NH(2) groups are provided by glutamine, and one molecule of ATP is hydrogenolyzed for each amidation. The chain is Probable cobyric acid synthase from Methanosphaerula palustris (strain ATCC BAA-1556 / DSM 19958 / E1-9c).